We begin with the raw amino-acid sequence, 500 residues long: L-arabinose isomerase (500 aa).

The Mn(2+) site is built by Glu-306, Glu-333, His-350, and His-450.

Belongs to the arabinose isomerase family. As to quaternary structure, homohexamer. Mn(2+) is required as a cofactor.

It catalyses the reaction beta-L-arabinopyranose = L-ribulose. The protein operates within carbohydrate degradation; L-arabinose degradation via L-ribulose; D-xylulose 5-phosphate from L-arabinose (bacterial route): step 1/3. Its function is as follows. Catalyzes the conversion of L-arabinose to L-ribulose. This is L-arabinose isomerase from Escherichia fergusonii (strain ATCC 35469 / DSM 13698 / CCUG 18766 / IAM 14443 / JCM 21226 / LMG 7866 / NBRC 102419 / NCTC 12128 / CDC 0568-73).